Reading from the N-terminus, the 379-residue chain is ATP-sensitive inward rectifier potassium channel 10 (379 aa).

At 1 to 61 (MTSVAKVYYS…LKDLWTTFID (61 aa)) the chain is on the cytoplasmic side. 1,2-dioctanoyl-sn-glycero-3-phospho-(1D-myo-inositol-4,5-bisphosphate) is bound at residue Arg-36. The chain crosses the membrane as a helical span at residues 62–88 (MQWRYKLLLFSATFAGTWFLFGVVWYL). At 89 to 114 (VAVAHGDLLELDPPANHTPCVVQVHT) the chain is on the extracellular side. The cysteines at positions 108 and 140 are disulfide-linked. Residues 115–131 (LTGAFLFSLESQTTIGY) constitute an intramembrane region (discontinuously helical; Pore-forming). Positions 128–133 (TIGYGF) match the Selectivity filter motif. Residues 132–140 (GFRYISEEC) lie on the Extracellular side of the membrane. The helical transmembrane segment at 141–166 (PLAIVLLIAQLVLTTILEIFITGTFL) threads the bilayer. Residues 167 to 379 (AKIARPKKRA…SALSVRISNV (213 aa)) are Cytoplasmic-facing. Residues Lys-168, Arg-171, and Lys-173 each coordinate 1,2-dioctanoyl-sn-glycero-3-phospho-(1D-myo-inositol-4,5-bisphosphate). Residue 210-217 (GCQVTGKL) participates in ATP binding.

The protein belongs to the inward rectifier-type potassium channel (TC 1.A.2.1) family. KCNJ10 subfamily. In terms of assembly, homotetramer. In kidney cells, it forms heteromeric channels with Kir5.1/KCNJ16; this interaction is required for KCNJ16 localization to the basolateral membrane. Interacts with MAGI1, alone and possibly as a heteromer with KCNJ16; this interaction may facilitate KCNJ10/KCNJ16 potassium channel expression at the basolateral membrane in kidney cells. Interacts with PATJ. Expressed in kidney (at protein level). In the nephron, expressed in the distal convoluted tubule, the connecting tubule, the collecting duct and cortical thick ascending limbs.

It localises to the membrane. It is found in the basolateral cell membrane. The enzyme catalyses K(+)(in) = K(+)(out). With respect to regulation, channel activity is strongly regulated by variations of cytosolic pH; channels are activated by alkaline and inhibited by acidic pH values. Inhibited by Ba(2+) and Cs(+). Activated by phosphatidylinositol 4,5 biphosphate (PtdIns(4,5)P2). Its function is as follows. May be responsible for potassium buffering action of glial cells in the brain. Inward rectifier potassium channels are characterized by a greater tendency to allow potassium to flow into the cell rather than out of it. Their voltage dependence is regulated by the concentration of extracellular potassium; as external potassium is raised, the voltage range of the channel opening shifts to more positive voltages. The inward rectification is mainly due to the blockage of outward current by internal magnesium. Can be blocked by extracellular barium and cesium. In the kidney, together with KCNJ16, mediates basolateral K(+) recycling in distal tubules; this process is critical for Na(+) reabsorption at the tubules. This is ATP-sensitive inward rectifier potassium channel 10 from Homo sapiens (Human).